We begin with the raw amino-acid sequence, 169 residues long: NADH-quinone oxidoreductase subunit B (169 aa).

[4Fe-4S] cluster-binding residues include cysteine 42, cysteine 43, cysteine 107, and cysteine 136.

It belongs to the complex I 20 kDa subunit family. NDH-1 is composed of 14 different subunits. Subunits NuoB, C, D, E, F, and G constitute the peripheral sector of the complex. The cofactor is [4Fe-4S] cluster.

It localises to the cell inner membrane. The catalysed reaction is a quinone + NADH + 5 H(+)(in) = a quinol + NAD(+) + 4 H(+)(out). Functionally, NDH-1 shuttles electrons from NADH, via FMN and iron-sulfur (Fe-S) centers, to quinones in the respiratory chain. The immediate electron acceptor for the enzyme in this species is believed to be ubiquinone. Couples the redox reaction to proton translocation (for every two electrons transferred, four hydrogen ions are translocated across the cytoplasmic membrane), and thus conserves the redox energy in a proton gradient. In Helicobacter hepaticus (strain ATCC 51449 / 3B1), this protein is NADH-quinone oxidoreductase subunit B.